The primary structure comprises 121 residues: UPF0738 protein BPUM_1088 (121 aa).

This sequence belongs to the UPF0738 family.

The chain is UPF0738 protein BPUM_1088 from Bacillus pumilus (strain SAFR-032).